The sequence spans 203 residues: Glycerol-3-phosphate acyltransferase (203 aa).

5 helical membrane-spanning segments follow: residues 4 to 24 (IAPG…AILV), 56 to 76 (VAVL…AYML), 80 to 100 (PFWL…PVFF), 112 to 132 (FGAI…TWLL), and 138 to 158 (GYSS…VWWF).

It belongs to the PlsY family. In terms of assembly, probably interacts with PlsX.

It localises to the cell inner membrane. It catalyses the reaction an acyl phosphate + sn-glycerol 3-phosphate = a 1-acyl-sn-glycero-3-phosphate + phosphate. Its pathway is lipid metabolism; phospholipid metabolism. Functionally, catalyzes the transfer of an acyl group from acyl-phosphate (acyl-PO(4)) to glycerol-3-phosphate (G3P) to form lysophosphatidic acid (LPA). This enzyme utilizes acyl-phosphate as fatty acyl donor, but not acyl-CoA or acyl-ACP. This Enterobacter sp. (strain 638) protein is Glycerol-3-phosphate acyltransferase.